Consider the following 124-residue polypeptide: Small ribosomal subunit protein uS12 (124 aa).

Aspartate 89 carries the 3-methylthioaspartic acid modification.

The protein belongs to the universal ribosomal protein uS12 family. In terms of assembly, part of the 30S ribosomal subunit. Contacts proteins S8 and S17. May interact with IF1 in the 30S initiation complex.

In terms of biological role, with S4 and S5 plays an important role in translational accuracy. Interacts with and stabilizes bases of the 16S rRNA that are involved in tRNA selection in the A site and with the mRNA backbone. Located at the interface of the 30S and 50S subunits, it traverses the body of the 30S subunit contacting proteins on the other side and probably holding the rRNA structure together. The combined cluster of proteins S8, S12 and S17 appears to hold together the shoulder and platform of the 30S subunit. This chain is Small ribosomal subunit protein uS12, found in Thermoanaerobacter pseudethanolicus (strain ATCC 33223 / 39E) (Clostridium thermohydrosulfuricum).